The chain runs to 477 residues: Alkaline phosphatase (477 aa).

Asp44 contacts Mg(2+). A Zn(2+)-binding site is contributed by Asp44. Ser94 (phosphoserine intermediate) is an active-site residue. Asn124 is a glycosylation site (N-linked (GlcNAc...) asparagine). Residues His155 and Thr157 each coordinate Mg(2+). Cysteines 165 and 185 form a disulfide. N-linked (GlcNAc...) asparagine glycosylation occurs at Asn214. Glu315 is a Mg(2+) binding site. Zn(2+) contacts are provided by Asp320, His324, Asp361, and His362. Asn413 carries N-linked (GlcNAc...) asparagine glycosylation. His437 contributes to the Zn(2+) binding site.

In terms of assembly, homodimer. Mg(2+) is required as a cofactor. Requires Zn(2+) as cofactor.

Its subcellular location is the cell membrane. The enzyme catalyses a phosphate monoester + H2O = an alcohol + phosphate. In Gadus morhua (Atlantic cod), this protein is Alkaline phosphatase.